The sequence spans 190 residues: Elongation factor P (190 aa).

Lys34 is modified (N6-(3,6-diaminohexanoyl)-5-hydroxylysine).

Belongs to the elongation factor P family. In terms of processing, may be beta-lysylated on the epsilon-amino group of Lys-34 by the combined action of EpmA and EpmB, and then hydroxylated on the C5 position of the same residue by EpmC (if this protein is present). Lysylation is critical for the stimulatory effect of EF-P on peptide-bond formation. The lysylation moiety may extend toward the peptidyltransferase center and stabilize the terminal 3-CCA end of the tRNA. Hydroxylation of the C5 position on Lys-34 may allow additional potential stabilizing hydrogen-bond interactions with the P-tRNA.

It localises to the cytoplasm. It participates in protein biosynthesis; polypeptide chain elongation. Its function is as follows. Involved in peptide bond synthesis. Alleviates ribosome stalling that occurs when 3 or more consecutive Pro residues or the sequence PPG is present in a protein, possibly by augmenting the peptidyl transferase activity of the ribosome. Modification of Lys-34 is required for alleviation. This chain is Elongation factor P, found in Psychrobacter cryohalolentis (strain ATCC BAA-1226 / DSM 17306 / VKM B-2378 / K5).